Consider the following 657-residue polypeptide: MFGKGLVKKSLLFFSGVSTMAVFLVSCGATRIWESSIQLLVSNDEATLADKSFSEMSYEGIRRYFRSQKHIELPSPNSSLLQDGNGLWKRPGRTLSDRIATFKNIKNDGSDVIVATGFNQQEALQAISSDDRRYLADKNDLAKVGFIFVDGQIEKEYNVINKTPQFRSTPLNISSVAFRSDDGSFLTGVATAVYLNLNQDYFLKKNGATNNSSQDLTVSGFVGVPIPSTLSFLNGFRLGIAYFNEVIYTHLSDAETTSDNKSNSSSASNSVLVQLKQMQGNDKKIKKIKWISPKQGSDNNSNLSIDDHKSGSFSSTEPRATTIINNLLDKGVSAIIPVAGPQVNLAVNEVARRKAHTAIIGVDSAQELLDINQDAPDKDQLIKGNKKIIPFSSIKALDVAIENMLIAIQKGSDNNGYKGFGYNNIGTVGTSSVGISEAGYEFLIDPVFWKTTQSQGKSMATNMTNLKRLSSDDTNTKKALKEVSTHKNGSDKDGIIGKYSNLLTKKSTTVTAVAQKSMTDNNSGTEQKKNLSEVDTKKKEKESKGKTQSNGQDSGQQNGKETNDIISKYSKLLTMTTMNNKVMSSKKQSSDDNSFKKTSENGDWVIKGDELTKKKSTELPAFAKGADYPTFPTEAVSVINGSTALDGKGFKWSFKQI.

An N-terminal signal peptide occupies residues Met-1–Ser-26. Cys-27 carries N-palmitoyl cysteine lipidation. The S-diacylglycerol cysteine moiety is linked to residue Cys-27. Disordered stretches follow at residues Ile-291 to Thr-316, Arg-468 to Ile-496, and Lys-516 to Asn-563. Residues Lys-294 to Ser-304 show a composition bias toward polar residues. Residues Leu-469–Ile-495 show a composition bias toward basic and acidic residues. Polar residues predominate over residues Lys-516 to Thr-525. Positions Glu-526–Gly-545 are enriched in basic and acidic residues. The span at Lys-546–Gly-559 shows a compositional bias: low complexity.

This sequence to T.pallidum TmpC.

Its subcellular location is the cell membrane. This is an uncharacterized protein from Mycoplasma pneumoniae (strain ATCC 29342 / M129 / Subtype 1) (Mycoplasmoides pneumoniae).